Reading from the N-terminus, the 371-residue chain is MVLDPRDSLLSSYDYPLDPERIAQLPVEPRHAARLLIVQPLGMKPPIARHAEVWDWQEELRAGDLLVINDTRVLKARLRVRRSGGGLAELLVLEPRGEGRWLCLGRPAKRLRPGDQLWLEALGEEPIALQVISKDSASGGRVVQFPSHYANAEQLELLLERYGEVPLPPYIKCHDPSDSERYQTRYASRPGAVAAPTAGLHLSDELLEALKQRGVMLTSVTLHVGLGTFRPVETEDLRHLQLHSEWVEVRDEVVAAVMACRARAGRVIAVGTTSVRALEGAALAGGGFLQSFCGPVDLVIQPGYRFAVVDGLLTNFHLPKSSLLLLVSAMVGRERLLALYAEAIEHHYRFFSYGDAMWIDPGAVLPAARPC.

This sequence belongs to the QueA family. In terms of assembly, monomer.

The protein localises to the cytoplasm. It carries out the reaction 7-aminomethyl-7-carbaguanosine(34) in tRNA + S-adenosyl-L-methionine = epoxyqueuosine(34) in tRNA + adenine + L-methionine + 2 H(+). It functions in the pathway tRNA modification; tRNA-queuosine biosynthesis. Functionally, transfers and isomerizes the ribose moiety from AdoMet to the 7-aminomethyl group of 7-deazaguanine (preQ1-tRNA) to give epoxyqueuosine (oQ-tRNA). This chain is S-adenosylmethionine:tRNA ribosyltransferase-isomerase, found in Prochlorococcus marinus (strain MIT 9303).